The primary structure comprises 144 residues: D-aminoacyl-tRNA deacylase (144 aa).

A Gly-cisPro motif, important for rejection of L-amino acids motif is present at residues 136–137; sequence GP.

This sequence belongs to the DTD family. In terms of assembly, homodimer.

The protein resides in the cytoplasm. The enzyme catalyses glycyl-tRNA(Ala) + H2O = tRNA(Ala) + glycine + H(+). It catalyses the reaction a D-aminoacyl-tRNA + H2O = a tRNA + a D-alpha-amino acid + H(+). Functionally, an aminoacyl-tRNA editing enzyme that deacylates mischarged D-aminoacyl-tRNAs. Also deacylates mischarged glycyl-tRNA(Ala), protecting cells against glycine mischarging by AlaRS. Acts via tRNA-based rather than protein-based catalysis; rejects L-amino acids rather than detecting D-amino acids in the active site. By recycling D-aminoacyl-tRNA to D-amino acids and free tRNA molecules, this enzyme counteracts the toxicity associated with the formation of D-aminoacyl-tRNA entities in vivo and helps enforce protein L-homochirality. The protein is D-aminoacyl-tRNA deacylase of Vibrio atlanticus (strain LGP32) (Vibrio splendidus (strain Mel32)).